Here is an 89-residue protein sequence, read N- to C-terminus: uncharacterized protein (89 aa).

A run of 3 helical transmembrane segments spans residues isoleucine 9 to isoleucine 29, isoleucine 35 to leucine 55, and isoleucine 65 to serine 85.

It localises to the membrane. This is an uncharacterized protein from Schizosaccharomyces pombe (strain 972 / ATCC 24843) (Fission yeast).